Consider the following 352-residue polypeptide: Small ribosomal subunit biogenesis GTPase RsgA (352 aa).

Over residues 1 to 15 (MTKRKLTQNQKRRIH) the composition is skewed to basic residues. The segment at 1 to 26 (MTKRKLTQNQKRRIHSNNVKALDRHH) is disordered. Residues 106-274 (ENEIARPDYY…LIDSPGIREF (169 aa)) form the CP-type G domain. GTP is bound by residues 162–165 (NKVD) and 216–224 (GQSGVGKSS). Zn(2+) contacts are provided by C298, C303, H305, and C311.

The protein belongs to the TRAFAC class YlqF/YawG GTPase family. RsgA subfamily. In terms of assembly, monomer. Associates with 30S ribosomal subunit, binds 16S rRNA. It depends on Zn(2+) as a cofactor.

It localises to the cytoplasm. Functionally, one of several proteins that assist in the late maturation steps of the functional core of the 30S ribosomal subunit. Helps release RbfA from mature subunits. May play a role in the assembly of ribosomal proteins into the subunit. Circularly permuted GTPase that catalyzes slow GTP hydrolysis, GTPase activity is stimulated by the 30S ribosomal subunit. The sequence is that of Small ribosomal subunit biogenesis GTPase RsgA from Mannheimia succiniciproducens (strain KCTC 0769BP / MBEL55E).